The primary structure comprises 352 residues: Putative pectinesterase 11 (352 aa).

Residues 13 to 35 (ANYHHIIIINIFILSSITSSSMA) form a helical membrane-spanning segment. N-linked (GlcNAc...) asparagine glycosylation is present at N76. The active-site Proton donor is D175. D196 (nucleophile) is an active-site residue. The N-linked (GlcNAc...) asparagine glycan is linked to N218. Substrate-binding residues include R252 and W254. A disordered region spans residues 332 to 352 (LRPAPSHFKNAPKQTQNKEIN). The span at 343-352 (PKQTQNKEIN) shows a compositional bias: polar residues.

The protein belongs to the pectinesterase family.

It is found in the membrane. It carries out the reaction [(1-&gt;4)-alpha-D-galacturonosyl methyl ester](n) + n H2O = [(1-&gt;4)-alpha-D-galacturonosyl](n) + n methanol + n H(+). The protein operates within glycan metabolism; pectin degradation; 2-dehydro-3-deoxy-D-gluconate from pectin: step 1/5. Its function is as follows. Acts in the modification of cell walls via demethylesterification of cell wall pectin. The chain is Putative pectinesterase 11 (PME11) from Arabidopsis thaliana (Mouse-ear cress).